The primary structure comprises 465 residues: Serine carboxypeptidase-like 46 (465 aa).

A signal peptide spans 1–25 (MPRLQCLTMATSLILLLQALSLVSS). 3 disulfides stabilise this stretch: Cys88–Cys344, Cys245–Cys263, and Cys288–Cys313. 2 N-linked (GlcNAc...) asparagine glycosylation sites follow: Asn137 and Asn170. Ser179 is an active-site residue. Residue Asn246 is glycosylated (N-linked (GlcNAc...) asparagine). Active-site residues include Asp381 and His438.

The protein belongs to the peptidase S10 family. In terms of tissue distribution, ubiquitous.

It is found in the secreted. Functionally, probable carboxypeptidase. The polypeptide is Serine carboxypeptidase-like 46 (SCPL46) (Arabidopsis thaliana (Mouse-ear cress)).